The chain runs to 259 residues: Thiazole synthase (259 aa).

Lys-98 acts as the Schiff-base intermediate with DXP in catalysis. 1-deoxy-D-xylulose 5-phosphate contacts are provided by residues Gly-159, 185–186 (AG), and 207–208 (NS).

Belongs to the ThiG family. Homotetramer. Forms heterodimers with either ThiH or ThiS.

Its subcellular location is the cytoplasm. It catalyses the reaction [ThiS sulfur-carrier protein]-C-terminal-Gly-aminoethanethioate + 2-iminoacetate + 1-deoxy-D-xylulose 5-phosphate = [ThiS sulfur-carrier protein]-C-terminal Gly-Gly + 2-[(2R,5Z)-2-carboxy-4-methylthiazol-5(2H)-ylidene]ethyl phosphate + 2 H2O + H(+). Its pathway is cofactor biosynthesis; thiamine diphosphate biosynthesis. Catalyzes the rearrangement of 1-deoxy-D-xylulose 5-phosphate (DXP) to produce the thiazole phosphate moiety of thiamine. Sulfur is provided by the thiocarboxylate moiety of the carrier protein ThiS. In vitro, sulfur can be provided by H(2)S. This chain is Thiazole synthase, found in Chlorobaculum tepidum (strain ATCC 49652 / DSM 12025 / NBRC 103806 / TLS) (Chlorobium tepidum).